The sequence spans 284 residues: uncharacterized protein (284 aa).

Topologically, residues 1 to 8 (MLWKVSKM) are cytoplasmic. The helical transmembrane segment at 9–25 (FLGGLVALTTISVATLY) threads the bilayer. Topologically, residues 26 to 80 (HYQNRLVYPSWAQGARNHVDTPDSRGIPYEKLTLITQDHIKLEAWDIKNENSTST) are extracellular. The chain crosses the membrane as a helical span at residues 81–101 (VLILCPNAGNIGYFILIIDIF). Residues 102–284 (YRQFGMSVFI…RDFLIEKGFI (183 aa)) lie on the Cytoplasmic side of the membrane.

The protein to S.pombe bem46 and M.tuberculosis Rv2307c.

It is found in the mitochondrion membrane. This is an uncharacterized protein from Saccharomyces cerevisiae (strain ATCC 204508 / S288c) (Baker's yeast).